Consider the following 144-residue polypeptide: MLKGIHPAISPELLKVLAEMGHGDELVLSDAHFPAHSIHSKVIRADGIGVATLLEGISALFEFDQYVEAPLAMMQAVPGDTLDPSVEERYLAAIKKVNGSTPKVERVERFAFYDRAKTAYAVVITGELAKYGNIIIKKGVTPVK.

H22 serves as the catalytic Proton donor. Substrate contacts are provided by residues D30, R109, and 131–133; that span reads YGN.

This sequence belongs to the RbsD / FucU family. FucU mutarotase subfamily. In terms of assembly, homodecamer.

It is found in the cytoplasm. It catalyses the reaction alpha-L-fucose = beta-L-fucose. It functions in the pathway carbohydrate metabolism; L-fucose metabolism. Its function is as follows. Involved in the anomeric conversion of L-fucose. The chain is L-fucose mutarotase from Actinobacillus pleuropneumoniae serotype 5b (strain L20).